Reading from the N-terminus, the 500-residue chain is Probable cytosol aminopeptidase (500 aa).

Positions 264 and 269 each coordinate Mn(2+). Lys276 is a catalytic residue. Mn(2+) is bound by residues Asp287, Asp346, and Glu348. The active site involves Arg350.

This sequence belongs to the peptidase M17 family. Mn(2+) is required as a cofactor.

It localises to the cytoplasm. The enzyme catalyses Release of an N-terminal amino acid, Xaa-|-Yaa-, in which Xaa is preferably Leu, but may be other amino acids including Pro although not Arg or Lys, and Yaa may be Pro. Amino acid amides and methyl esters are also readily hydrolyzed, but rates on arylamides are exceedingly low.. It carries out the reaction Release of an N-terminal amino acid, preferentially leucine, but not glutamic or aspartic acids.. In terms of biological role, presumably involved in the processing and regular turnover of intracellular proteins. Catalyzes the removal of unsubstituted N-terminal amino acids from various peptides. This chain is Probable cytosol aminopeptidase, found in Rhodopseudomonas palustris (strain TIE-1).